Here is a 174-residue protein sequence, read N- to C-terminus: MLWVVMDDLLYIGALGAPFGVRGQIRLHSISSHPEHLIRHLRTVFIGPKRVPHQVSRLYMHKPGLLIIQLQTITDRDAAADLRGEEVYIAAADAAPLAADEFFYHDVIGMQAVTDSGEDIGEVRDILETGAGEIVVITRRGRPDALVPMVRDFIVAIDVGERRLVIRPIAGLLD.

A PRC barrel domain is found at 99 to 172 (ADEFFYHDVI…RLVIRPIAGL (74 aa)).

This sequence belongs to the RimM family. As to quaternary structure, binds ribosomal protein uS19.

Its subcellular location is the cytoplasm. In terms of biological role, an accessory protein needed during the final step in the assembly of 30S ribosomal subunit, possibly for assembly of the head region. Essential for efficient processing of 16S rRNA. May be needed both before and after RbfA during the maturation of 16S rRNA. It has affinity for free ribosomal 30S subunits but not for 70S ribosomes. The polypeptide is Ribosome maturation factor RimM (Chloroflexus aurantiacus (strain ATCC 29366 / DSM 635 / J-10-fl)).